A 154-amino-acid polypeptide reads, in one-letter code: Large ribosomal subunit protein uL13 (154 aa).

This sequence belongs to the universal ribosomal protein uL13 family. Part of the 50S ribosomal subunit.

Functionally, this protein is one of the early assembly proteins of the 50S ribosomal subunit, although it is not seen to bind rRNA by itself. It is important during the early stages of 50S assembly. This chain is Large ribosomal subunit protein uL13, found in Bradyrhizobium diazoefficiens (strain JCM 10833 / BCRC 13528 / IAM 13628 / NBRC 14792 / USDA 110).